Reading from the N-terminus, the 218-residue chain is Small ribosomal subunit protein uS3 (218 aa).

A KH type-2 domain is found at 39–107 (IRDYIKSKLL…QISINIVEIK (69 aa)).

It belongs to the universal ribosomal protein uS3 family. In terms of assembly, part of the 30S ribosomal subunit. Forms a tight complex with proteins S10 and S14.

Functionally, binds the lower part of the 30S subunit head. Binds mRNA in the 70S ribosome, positioning it for translation. This is Small ribosomal subunit protein uS3 from Desulforudis audaxviator (strain MP104C).